The following is a 212-amino-acid chain: Ribosomal RNA small subunit methyltransferase G (212 aa).

Residues Gly80, Leu85, 131–132 (AE), and Arg146 each bind S-adenosyl-L-methionine.

The protein belongs to the methyltransferase superfamily. RNA methyltransferase RsmG family.

The protein localises to the cytoplasm. The enzyme catalyses guanosine(527) in 16S rRNA + S-adenosyl-L-methionine = N(7)-methylguanosine(527) in 16S rRNA + S-adenosyl-L-homocysteine. Functionally, specifically methylates the N7 position of guanine in position 527 of 16S rRNA. The sequence is that of Ribosomal RNA small subunit methyltransferase G from Xanthomonas euvesicatoria pv. vesicatoria (strain 85-10) (Xanthomonas campestris pv. vesicatoria).